The primary structure comprises 198 residues: Recombination protein RecR (198 aa).

A C4-type zinc finger spans residues 57 to 72; it reads CDKCNTFTEAQICEVC. Positions 80–175 constitute a Toprim domain; that stretch reads TLLCVVETPA…AVTRLARGVP (96 aa).

It belongs to the RecR family.

In terms of biological role, may play a role in DNA repair. It seems to be involved in an RecBC-independent recombinational process of DNA repair. It may act with RecF and RecO. The protein is Recombination protein RecR of Burkholderia multivorans (strain ATCC 17616 / 249).